Here is a 313-residue protein sequence, read N- to C-terminus: 18S rRNA aminocarboxypropyltransferase (313 aa).

The tract at residues 1-30 is disordered; the sequence is MGKGKNKMHEPKNGRPQRGANGHSSRQNHR. S62, V110, L133, and W148 together coordinate S-adenosyl-L-methionine. The segment covering 215-228 has biased composition (basic and acidic residues); sequence KETQERKSRAKEED. A disordered region spans residues 215–313; it reads KETQERKSRA…SYDPLGNLIR (99 aa). The span at 237 to 246 shows a compositional bias: polar residues; the sequence is RRGNGSQSDT. Over residues 247-257 the composition is skewed to acidic residues; sequence SESEENSEQSD. Phosphoserine is present on residues S286 and S289.

It belongs to the TDD superfamily. TSR3 family.

The protein resides in the cytoplasm. It localises to the nucleus. It carries out the reaction an N(1)-methylpseudouridine in rRNA + S-adenosyl-L-methionine = N(1)-methyl-N(3)-[(3S)-3-amino-3-carboxypropyl]pseudouridine in rRNA + S-methyl-5'-thioadenosine + H(+). It catalyses the reaction N(1)-methylpseudouridine(1191) in yeast 18S rRNA + S-adenosyl-L-methionine = N(1)-methyl-N(3)-[(3S)-3-amino-3-carboxypropyl]pseudouridine(1191) in yeast 18S rRNA + S-methyl-5'-thioadenosine + H(+). Its function is as follows. Aminocarboxypropyltransferase that catalyzes the aminocarboxypropyl transfer on pseudouridine at position 1191 (Psi1191) in 18S rRNA. It constitutes the last step in biosynthesis of the hypermodified N1-methyl-N3-(3-amino-3-carboxypropyl) pseudouridine (m1acp3-Psi) conserved in eukaryotic 18S rRNA. Required for processing 35S pre-rRNA at site D. The protein is 18S rRNA aminocarboxypropyltransferase of Saccharomyces cerevisiae (strain ATCC 204508 / S288c) (Baker's yeast).